The sequence spans 970 residues: Sodium/calcium exchanger 1 (970 aa).

Residues Met-1–Ala-32 form the signal peptide. At Glu-33–Lys-71 the chain is on the extracellular side. An N-linked (GlcNAc...) asparagine glycan is attached at Asn-41. The chain crosses the membrane as a helical span at residues Ile-72–Ile-92. The Cytoplasmic portion of the chain corresponds to Ala-93–Asn-133. The helical transmembrane segment at Leu-134–Cys-154 threads the bilayer. Residues Ala-138 to Ile-178 form an Alpha-1 repeat. The Extracellular portion of the chain corresponds to Gly-155–Thr-167. Asn-157 is a glycosylation site (N-linked (GlcNAc...) asparagine). The helical transmembrane segment at Ile-168 to Pro-188 threads the bilayer. Residues Asp-189–Phe-201 are Cytoplasmic-facing. The helical transmembrane segment at Phe-202–Ile-222 threads the bilayer. The Extracellular segment spans residues Ser-223–Glu-228. The chain crosses the membrane as a helical span at residues Val-229 to Ala-249. At Asp-250–Gly-797 the chain is on the cytoplasmic side. Residues Arg-251–Gly-270 form a putative calmodulin-binding region region. Phosphoserine occurs at positions 282 and 389. 2 consecutive Calx-beta domains span residues Val-393 to Ser-493 and Ala-524 to Gly-624. Ca(2+) is bound by residues Glu-417, Asp-453, Asp-478, Asp-479, Ile-481, Glu-483, Glu-486, Asp-530, Asp-531, Asp-532, Glu-548, Asp-584, Asp-610, Glu-611, Glu-612, and Glu-715. A helical transmembrane segment spans residues Trp-798–Leu-818. At Ala-819 to His-821 the chain is on the extracellular side. A helical transmembrane segment spans residues Phe-822–Thr-842. Residues Ala-839–Val-875 form an Alpha-2 repeat. The Cytoplasmic segment spans residues Ser-843–Asn-871. Residues Ala-872–Ala-892 form a helical membrane-spanning segment. Over Asn-893–Thr-903 the chain is Extracellular. The helical transmembrane segment at Leu-904–Tyr-924 threads the bilayer. Residues Arg-925–Lys-941 are Cytoplasmic-facing. Residues Leu-942–Glu-962 traverse the membrane as a helical segment. Topologically, residues Ala-963–Phe-970 are extracellular.

The protein belongs to the Ca(2+):cation antiporter (CaCA) (TC 2.A.19) family. SLC8 subfamily.

The protein resides in the cell membrane. It carries out the reaction Ca(2+)(in) + 3 Na(+)(out) = Ca(2+)(out) + 3 Na(+)(in). Activated by micromolar levels of Ca(2+). Functionally, mediates the exchange of one Ca(2+) ion against three to four Na(+) ions across the cell membrane, and thereby contributes to the regulation of cytoplasmic Ca(2+) levels and Ca(2+)-dependent cellular processes. Contributes to Ca(2+) transport during excitation-contraction coupling in muscle. In a first phase, voltage-gated channels mediate the rapid increase of cytoplasmic Ca(2+) levels due to release of Ca(2+) stores from the endoplasmic reticulum. SLC8A1 mediates the export of Ca(2+) from the cell during the next phase, so that cytoplasmic Ca(2+) levels rapidly return to baseline. Required for normal embryonic heart development and the onset of heart contractions. The protein is Sodium/calcium exchanger 1 (SLC8A1) of Cavia porcellus (Guinea pig).